Consider the following 396-residue polypeptide: MAAGMMKDLEAFRKAQRADGPATILAIGTATPPNAVDQSSYPDYYFKITNSEHMTELKEKFRRMCDKSAIKKRYMYLTEEILKENPKVCEYMAPSLDARQDMVVVEVPRLGKEAAAKAIKEWGQPKSKITHVIFCTTSGVDMPGADYQLTKLLGLRPSVKRVMMYQQGCFAGGTVLRVAKDLAENNRGARVLVVCSEITAVTFRGPSDTHLDSMVGQALFGDGAAALIVGADPVPEVEKPCFELMWTAQTILPDSDGAIDGHLREVGLTFHLLKDVPGLISKNIEKSLVEAFQQFGISDWNQLFWIAHPGGPAILDQVEAKLNLDPKKLSATRQVLSDYGNMSSACVHFILDEMRKSSKEKGCSTTGEGLDVGVLFGFGPGLTVETVVLKSVPLLD.

Cysteine 169 is an active-site residue.

This sequence belongs to the thiolase-like superfamily. Chalcone/stilbene synthases family.

The enzyme catalyses (E)-4-coumaroyl-CoA + 3 malonyl-CoA + 3 H(+) = 2',4,4',6'-tetrahydroxychalcone + 3 CO2 + 4 CoA. The protein operates within secondary metabolite biosynthesis; flavonoid biosynthesis. In terms of biological role, the primary product of this enzyme is 4,2',4',6'-tetrahydroxychalcone (also termed naringenin-chalcone or chalcone) which can under specific conditions spontaneously isomerize into naringenin. In Pinus sylvestris (Scotch pine), this protein is Chalcone synthase (CHS).